A 393-amino-acid polypeptide reads, in one-letter code: NAD(P)H-quinone oxidoreductase subunit H, chloroplastic (393 aa).

This sequence belongs to the complex I 49 kDa subunit family. As to quaternary structure, NDH is composed of at least 16 different subunits, 5 of which are encoded in the nucleus.

Its subcellular location is the plastid. The protein resides in the chloroplast thylakoid membrane. It carries out the reaction a plastoquinone + NADH + (n+1) H(+)(in) = a plastoquinol + NAD(+) + n H(+)(out). It catalyses the reaction a plastoquinone + NADPH + (n+1) H(+)(in) = a plastoquinol + NADP(+) + n H(+)(out). NDH shuttles electrons from NAD(P)H:plastoquinone, via FMN and iron-sulfur (Fe-S) centers, to quinones in the photosynthetic chain and possibly in a chloroplast respiratory chain. The immediate electron acceptor for the enzyme in this species is believed to be plastoquinone. Couples the redox reaction to proton translocation, and thus conserves the redox energy in a proton gradient. In Jasminum nudiflorum (Winter jasmine), this protein is NAD(P)H-quinone oxidoreductase subunit H, chloroplastic.